We begin with the raw amino-acid sequence, 716 residues long: Probable glutamate--tRNA ligase, cytoplasmic (716 aa).

Ser-190 is subject to Phosphoserine. 210–212 contacts L-glutamate; that stretch reads RFP. The short motif at 215-224 is the 'HIGH' region element; the sequence is PSGYLHIGHA. His-220 serves as a coordination point for ATP. L-glutamate is bound by residues Asp-246, 386 to 390, and Arg-404; that span reads YDFAC. ATP contacts are provided by residues Glu-407 and 441–445; that span reads LLSKR. Residues 441-445 carry the 'KMSKS' region motif; that stretch reads LLSKR.

This sequence belongs to the class-I aminoacyl-tRNA synthetase family. Glutamate--tRNA ligase type 2 subfamily. In terms of assembly, component of a yeast aminoacyl-tRNA synthase (aaRS) complex formed by methionyl-tRNA synthase, glutamyl-tRNA synthase and the tRNA aminoacylation cofactor arc1 in a stoichiometric complex. Interacts with arc1/SPAC30C2.04.

Its subcellular location is the cytoplasm. The protein localises to the nucleus. It catalyses the reaction tRNA(Glu) + L-glutamate + ATP = L-glutamyl-tRNA(Glu) + AMP + diphosphate. In terms of biological role, catalyzes the attachment of glutamate to tRNA(Glu) in a two-step reaction: glutamate is first activated by ATP to form Glu-AMP and then transferred to the acceptor end of tRNA(Glu). The sequence is that of Probable glutamate--tRNA ligase, cytoplasmic (gus1) from Schizosaccharomyces pombe (strain 972 / ATCC 24843) (Fission yeast).